A 297-amino-acid polypeptide reads, in one-letter code: Glycerol-3-phosphate dehydrogenase [NAD(P)+] (297 aa).

Residues Trp11, Arg33, and Lys79 each coordinate NADPH. Sn-glycerol 3-phosphate-binding residues include Lys79, Gly107, and Ser109. NADPH is bound at residue Ala111. Positions 161, 214, 224, 225, and 226 each coordinate sn-glycerol 3-phosphate. Catalysis depends on Lys161, which acts as the Proton acceptor. Arg225 provides a ligand contact to NADPH. NADPH contacts are provided by Val249 and Glu251.

This sequence belongs to the NAD-dependent glycerol-3-phosphate dehydrogenase family.

It localises to the cytoplasm. The enzyme catalyses sn-glycerol 3-phosphate + NAD(+) = dihydroxyacetone phosphate + NADH + H(+). The catalysed reaction is sn-glycerol 3-phosphate + NADP(+) = dihydroxyacetone phosphate + NADPH + H(+). Its pathway is membrane lipid metabolism; glycerophospholipid metabolism. Its function is as follows. Catalyzes the reduction of the glycolytic intermediate dihydroxyacetone phosphate (DHAP) to sn-glycerol 3-phosphate (G3P), the key precursor for phospholipid synthesis. The sequence is that of Glycerol-3-phosphate dehydrogenase [NAD(P)+] from Campylobacter jejuni subsp. doylei (strain ATCC BAA-1458 / RM4099 / 269.97).